The following is a 254-amino-acid chain: Mediator of RNA polymerase II transcription subunit 4 (254 aa).

A coiled-coil region spans residues 72-114 (RVHQEMQSLEKEVEKRDSDIQQLQKQLKEAEHILATAVYQAKE). Residues 215–254 (ILPPHHGNDFGLEPPGHNKENEDDVEAMSTDSSSSSSDSD) form a disordered region. Positions 243–254 (STDSSSSSSDSD) are enriched in low complexity.

The protein belongs to the Mediator complex subunit 4 family. In terms of assembly, component of the Mediator complex.

Its subcellular location is the nucleus. Component of the Mediator complex, a coactivator involved in the regulated transcription of nearly all RNA polymerase II-dependent genes. Mediator functions as a bridge to convey information from gene-specific regulatory proteins to the basal RNA polymerase II transcription machinery. Mediator is recruited to promoters by direct interactions with regulatory proteins and serves as a scaffold for the assembly of a functional preinitiation complex with RNA polymerase II and the general transcription factors. In Danio rerio (Zebrafish), this protein is Mediator of RNA polymerase II transcription subunit 4 (med4).